A 454-amino-acid chain; its full sequence is Zinc finger protein 474 (454 aa).

The interval 48–85 is disordered; sequence RGEKIKTNPRKNRPGTVILSKQSSRRIMSGSQPRPPVI. Polar residues predominate over residues 66-79; sequence LSKQSSRRIMSGSQ. The segment at 91 to 120 adopts a C2HC/C3H-type 1 zinc-finger fold; it reads GFRVCYICGREFGSQSLGIHEPQCLEKWRV. Positions 95, 98, 110, and 114 each coordinate Zn(2+). The tract at residues 125 to 146 is disordered; it reads LPKHLRRPEPSKPPPFSGSGSY. C2HC/C3H-type zinc fingers lie at residues 162–191, 218–247, 281–310, 352–381, and 425–454; these read QLLP…KVEG, RTVI…KWKV, QLVS…QPSG, PTIV…KWHN, and QLVP…KVAK. 8 residues coordinate Zn(2+): cysteine 166, cysteine 169, histidine 181, cysteine 185, cysteine 222, cysteine 225, histidine 237, and cysteine 241. Positions 256 to 282 are disordered; that stretch reads FRQPLPQKPQPLLTGQPKHAGPRQGQL. Cysteine 285, cysteine 288, histidine 300, cysteine 304, cysteine 356, cysteine 359, histidine 371, cysteine 375, cysteine 429, cysteine 432, histidine 444, and cysteine 448 together coordinate Zn(2+). A disordered region spans residues 299 to 345; it reads VHQRSCKAQPSGPKVQDLTLGSRGGLKESTNPKPQRNMAAPPVTDKP.

Zn(2+) is required as a cofactor.

The sequence is that of Zinc finger protein 474 (ZNF474) from Bos taurus (Bovine).